The chain runs to 418 residues: Putative ion-transport protein YfeO (418 aa).

Transmembrane regions (helical) follow at residues 9 to 31 (MLLL…IMVM), 55 to 77 (SPLW…IRFS), 90 to 112 (LIGA…LGLA), 122 to 140 (PIIT…RLLP), 147 to 169 (WTIL…AALI), 189 to 211 (PLMA…FSLP), 223 to 244 (ILSG…VWCL), 259 to 281 (FVLG…VSLF), 301 to 323 (YFLL…FRGG), 343 to 363 (VPAV…VLVV), and 376 to 398 (VVVP…WLLL).

The protein belongs to the chloride channel (TC 2.A.49) family.

The protein localises to the cell membrane. In Escherichia coli O6:H1 (strain CFT073 / ATCC 700928 / UPEC), this protein is Putative ion-transport protein YfeO (yfeO).